A 101-amino-acid polypeptide reads, in one-letter code: NAD(P)H-quinone oxidoreductase subunit 4L, chloroplastic (101 aa).

3 helical membrane passes run 2 to 22 (MLEH…YGLI), 32 to 52 (MCLE…SDLF), and 61 to 81 (IFSI…PAIV).

Belongs to the complex I subunit 4L family. NDH is composed of at least 16 different subunits, 5 of which are encoded in the nucleus.

It is found in the plastid. The protein resides in the chloroplast thylakoid membrane. The catalysed reaction is a plastoquinone + NADH + (n+1) H(+)(in) = a plastoquinol + NAD(+) + n H(+)(out). It carries out the reaction a plastoquinone + NADPH + (n+1) H(+)(in) = a plastoquinol + NADP(+) + n H(+)(out). NDH shuttles electrons from NAD(P)H:plastoquinone, via FMN and iron-sulfur (Fe-S) centers, to quinones in the photosynthetic chain and possibly in a chloroplast respiratory chain. The immediate electron acceptor for the enzyme in this species is believed to be plastoquinone. Couples the redox reaction to proton translocation, and thus conserves the redox energy in a proton gradient. In Chloranthus spicatus (Chulantree), this protein is NAD(P)H-quinone oxidoreductase subunit 4L, chloroplastic.